Consider the following 260-residue polypeptide: 6-carboxyhexanoate--CoA ligase (260 aa).

This sequence belongs to the BioW family. In terms of assembly, homodimer. Requires Mg(2+) as cofactor.

The enzyme catalyses heptanedioate + ATP + CoA = 6-carboxyhexanoyl-CoA + AMP + diphosphate. It participates in metabolic intermediate metabolism; pimeloyl-CoA biosynthesis; pimeloyl-CoA from pimelate: step 1/1. Catalyzes the transformation of pimelate into pimeloyl-CoA with concomitant hydrolysis of ATP to AMP. The polypeptide is 6-carboxyhexanoate--CoA ligase (Fibrobacter succinogenes (strain ATCC 19169 / S85)).